We begin with the raw amino-acid sequence, 23 residues long: Caerulein precursor fragment BM2 (23 aa).

In terms of tissue distribution, expressed by the skin glands.

Its subcellular location is the secreted. Functionally, antimicrobial peptide. This chain is Caerulein precursor fragment BM2, found in Xenopus boumbaensis (Mawa clawed frog).